A 210-amino-acid chain; its full sequence is Large ribosomal subunit protein uL4 (210 aa).

The segment at 46 to 89 (QGTASTLTRSEVRGGGRKPYKQKGTGRARQGSIRTPLRPGGGII) is disordered. Positions 60–71 (GGRKPYKQKGTG) are enriched in basic residues.

Belongs to the universal ribosomal protein uL4 family. As to quaternary structure, part of the 50S ribosomal subunit.

Functionally, one of the primary rRNA binding proteins, this protein initially binds near the 5'-end of the 23S rRNA. It is important during the early stages of 50S assembly. It makes multiple contacts with different domains of the 23S rRNA in the assembled 50S subunit and ribosome. Forms part of the polypeptide exit tunnel. In Prochlorococcus marinus (strain MIT 9215), this protein is Large ribosomal subunit protein uL4.